Consider the following 448-residue polypeptide: UDP-N-acetylmuramoylalanine--D-glutamate ligase (448 aa).

An ATP-binding site is contributed by glycine 116–threonine 122.

Belongs to the MurCDEF family.

It localises to the cytoplasm. It carries out the reaction UDP-N-acetyl-alpha-D-muramoyl-L-alanine + D-glutamate + ATP = UDP-N-acetyl-alpha-D-muramoyl-L-alanyl-D-glutamate + ADP + phosphate + H(+). It participates in cell wall biogenesis; peptidoglycan biosynthesis. In terms of biological role, cell wall formation. Catalyzes the addition of glutamate to the nucleotide precursor UDP-N-acetylmuramoyl-L-alanine (UMA). The chain is UDP-N-acetylmuramoylalanine--D-glutamate ligase from Pseudomonas fluorescens (strain Pf0-1).